The following is a 406-amino-acid chain: LIM/homeobox protein Lhx1 (406 aa).

2 LIM zinc-binding domains span residues 4 to 54 (CAGC…CKND) and 63 to 117 (CAGC…CKED). 2 disordered regions span residues 128–189 (NSLH…TIKA) and 293–374 (YDFF…EVFG). The span at 137 to 148 (SDPSLSPDSQDP) shows a compositional bias: low complexity. Basic and acidic residues predominate over residues 151–167 (DDAKDSESANVSDKEGG). S162 carries the phosphoserine modification. A DNA-binding region (homeobox) is located at residues 180–239 (RRGPRTTIKAKQLETLKAAFAATPKPTRHIREQLAQETGLNMRVIQVWFQNRRSKERRMK). The span at 315–327 (PSSGPSGTPLGGL) shows a compositional bias: low complexity. Residues 352 to 362 (GDSPSPEPSLP) are compositionally biased toward pro residues.

In terms of assembly, interacts with LDB1 via the tandem LIM domains.

Its subcellular location is the nucleus. Potential transcription factor. May play a role in early mesoderm formation and later in lateral mesoderm differentiation and neurogenesis. This chain is LIM/homeobox protein Lhx1 (LHX1), found in Saimiri boliviensis boliviensis (Bolivian squirrel monkey).